Reading from the N-terminus, the 645-residue chain is 1,4-alpha-glucan branching enzyme GlgB (645 aa).

D309 serves as the catalytic Nucleophile. The active-site Proton donor is E352. Positions V619–R645 are disordered. Over residues R636–R645 the composition is skewed to polar residues.

The protein belongs to the glycosyl hydrolase 13 family. GlgB subfamily. As to quaternary structure, monomer.

The enzyme catalyses Transfers a segment of a (1-&gt;4)-alpha-D-glucan chain to a primary hydroxy group in a similar glucan chain.. It functions in the pathway glycan biosynthesis; glycogen biosynthesis. Its function is as follows. Catalyzes the formation of the alpha-1,6-glucosidic linkages in glycogen by scission of a 1,4-alpha-linked oligosaccharide from growing alpha-1,4-glucan chains and the subsequent attachment of the oligosaccharide to the alpha-1,6 position. The polypeptide is 1,4-alpha-glucan branching enzyme GlgB (Bacillus anthracis (strain CDC 684 / NRRL 3495)).